A 676-amino-acid polypeptide reads, in one-letter code: Protein kinase C delta type (676 aa).

A C2 domain is found at 1–106; sequence MAPFLRIAFN…KNNGKAEFWL (106 aa). A phosphothreonine mark is found at Thr-43 and Thr-50. A Phosphotyrosine modification is found at Tyr-64. Position 130 is a phosphoserine (Ser-130). Phosphothreonine is present on Thr-141. At Tyr-155 the chain carries Phosphotyrosine. A Phorbol-ester/DAG-type 1 zinc finger spans residues 158–208; sequence NHEFIATFFGQPTFCSVCKDFVWGLNKQGYKCRQCNAAIHKKCIDKIIGRC. Residue Thr-218 is modified to Phosphothreonine. A Phorbol-ester/DAG-type 2 zinc finger spans residues 230-280; it reads PHRFKVHNYMSPTFCDHCGSLLWGLVKQGLKCEDCGMNVHHKCREKVANLC. Phosphoserine; by autocatalysis occurs at positions 299, 302, and 304. Ser-307 is subject to Phosphoserine. Position 313 is a phosphotyrosine (Tyr-313). Phosphotyrosine; by SRC is present on Tyr-334. Positions 349–603 constitute a Protein kinase domain; the sequence is FIFHKVLGKG…TGNIKIHPFF (255 aa). 355–363 is a binding site for ATP; it reads LGKGSFGKV. A Phosphotyrosine modification is found at Tyr-374. Lys-378 is an ATP binding site. At Thr-451 the chain carries Phosphothreonine. The Proton acceptor role is filled by Asp-473. Ser-503 and Ser-506 each carry phosphoserine. At Thr-507 the chain carries Phosphothreonine; by autocatalysis. A Phosphotyrosine modification is found at Tyr-567. Residues 604 to 675 enclose the AGC-kinase C-terminal domain; it reads KTINWTLLEK…VNPKFEHLLE (72 aa). Phosphoserine is present on residues Ser-645, Ser-654, Ser-658, and Ser-664.

This sequence belongs to the protein kinase superfamily. AGC Ser/Thr protein kinase family. PKC subfamily. As to quaternary structure, interacts with PDPK1 (via N-terminal region). Interacts with RAD9A. Interacts with CDCP1. Interacts with MUC1. Interacts with VASP. Interacts with CAVIN3. Interacts with PRKD2 (via N-terminus and zing-finger domain 1 and 2) in response to oxidative stress; the interaction is independent of PRKD2 tyrosine phosphorylation. Interacts with PLSC3; interaction is enhanced by UV irradiation. Interacts with PRKCH upstream open reading frame 2; the interaction leads to inhibition of kinase activity. Post-translationally, autophosphorylated and/or phosphorylated at Thr-507, within the activation loop; phosphorylation at Thr-507 is not a prerequisite for enzymatic activity. Autophosphorylated at Ser-299, Ser-302 and Ser-304. Upon TNFSF10/TRAIL treatment, phosphorylated at Tyr-155; phosphorylation is required for its translocation to the endoplasmic reticulum and cleavage by caspase-3. Phosphorylated at Tyr-313, Tyr-334 and Tyr-567; phosphorylation of Tyr-313 and Tyr-567 following thrombin or zymosan stimulation potentiates its kinase activity. Phosphorylated by protein kinase PDPK1; phosphorylation is inhibited by the apoptotic C-terminal cleavage product of PKN2. Phosphorylated at Tyr-313 through a SYK and SRC mechanism downstream of C-type lectin receptors activation, promoting its activation. Proteolytically cleaved into a catalytic subunit and a regulatory subunit by caspase-3 during apoptosis which results in kinase activation.

It localises to the cytoplasm. Its subcellular location is the perinuclear region. The protein resides in the nucleus. The protein localises to the cell membrane. It is found in the mitochondrion. It localises to the endomembrane system. It carries out the reaction L-seryl-[protein] + ATP = O-phospho-L-seryl-[protein] + ADP + H(+). The enzyme catalyses L-threonyl-[protein] + ATP = O-phospho-L-threonyl-[protein] + ADP + H(+). It catalyses the reaction L-tyrosyl-[protein] + ATP = O-phospho-L-tyrosyl-[protein] + ADP + H(+). Its activity is regulated as follows. Novel PKCs (PRKCD, PRKCE, PRKCH and PRKCQ) are calcium-insensitive, but activated by diacylglycerol (DAG) and phosphatidylserine. Three specific sites; Thr-507 (activation loop of the kinase domain), Ser-645 (turn motif) and Ser-664 (hydrophobic region), need to be phosphorylated for its full activation. Activated by caspase-3 (CASP3) cleavage during apoptosis. After cleavage, the pseudosubstrate motif in the regulatory subunit is released from the substrate recognition site of the catalytic subunit, which enables PRKCD to become constitutively activated. The catalytic subunit which displays properties of a sphingosine-dependent protein kinase is activated by D-erythro-sphingosine (Sph) or N,N-dimethyl-D-erythrosphingosine (DMS) or N,N,N-trimethyl-D-erythrosphingosine (TMS), but not by ceramide or Sph-1-P and is strongly inhibited by phosphatidylserine. Inhibited by PRKCH upstream open reading frame 2. Functionally, calcium-independent, phospholipid- and diacylglycerol (DAG)-dependent serine/threonine-protein kinase that plays contrasting roles in cell death and cell survival by functioning as a pro-apoptotic protein during DNA damage-induced apoptosis, but acting as an anti-apoptotic protein during cytokine receptor-initiated cell death, is involved in tumor suppression as well as survival of several cancers, is required for oxygen radical production by NADPH oxidase and acts as positive or negative regulator in platelet functional responses. Negatively regulates B cell proliferation and also has an important function in self-antigen induced B cell tolerance induction. Upon DNA damage, activates the promoter of the death-promoting transcription factor BCLAF1/Btf to trigger BCLAF1-mediated p53/TP53 gene transcription and apoptosis. In response to oxidative stress, interact with and activate CHUK/IKKA in the nucleus, causing the phosphorylation of p53/TP53. In the case of ER stress or DNA damage-induced apoptosis, can form a complex with the tyrosine-protein kinase ABL1 which trigger apoptosis independently of p53/TP53. In cytosol can trigger apoptosis by activating MAPK11 or MAPK14, inhibiting AKT1 and decreasing the level of X-linked inhibitor of apoptosis protein (XIAP), whereas in nucleus induces apoptosis via the activation of MAPK8 or MAPK9. Upon ionizing radiation treatment, is required for the activation of the apoptosis regulators BAX and BAK, which trigger the mitochondrial cell death pathway. Can phosphorylate MCL1 and target it for degradation which is sufficient to trigger for BAX activation and apoptosis. Is required for the control of cell cycle progression both at G1/S and G2/M phases. Mediates phorbol 12-myristate 13-acetate (PMA)-induced inhibition of cell cycle progression at G1/S phase by up-regulating the CDK inhibitor CDKN1A/p21 and inhibiting the cyclin CCNA2 promoter activity. In response to UV irradiation can phosphorylate CDK1, which is important for the G2/M DNA damage checkpoint activation. Can protect glioma cells from the apoptosis induced by TNFSF10/TRAIL, probably by inducing increased phosphorylation and subsequent activation of AKT1. Is highly expressed in a number of cancer cells and promotes cell survival and resistance against chemotherapeutic drugs by inducing cyclin D1 (CCND1) and hyperphosphorylation of RB1, and via several pro-survival pathways, including NF-kappa-B, AKT1 and MAPK1/3 (ERK1/2). Involved in antifungal immunity by mediating phosphorylation and activation of CARD9 downstream of C-type lectin receptors activation, promoting interaction between CARD9 and BCL10, followed by activation of NF-kappa-B and MAP kinase p38 pathways. Can also act as tumor suppressor upon mitogenic stimulation with PMA or TPA. In N-formyl-methionyl-leucyl-phenylalanine (fMLP)-treated cells, is required for NCF1 (p47-phox) phosphorylation and activation of NADPH oxidase activity, and regulates TNF-elicited superoxide anion production in neutrophils, by direct phosphorylation and activation of NCF1 or indirectly through MAPK1/3 (ERK1/2) signaling pathways. May also play a role in the regulation of NADPH oxidase activity in eosinophil after stimulation with IL5, leukotriene B4 or PMA. In collagen-induced platelet aggregation, acts a negative regulator of filopodia formation and actin polymerization by interacting with and negatively regulating VASP phosphorylation. Downstream of PAR1, PAR4 and CD36/GP4 receptors, regulates differentially platelet dense granule secretion; acts as a positive regulator in PAR-mediated granule secretion, whereas it negatively regulates CD36/GP4-mediated granule release. Phosphorylates MUC1 in the C-terminal and regulates the interaction between MUC1 and beta-catenin. The catalytic subunit phosphorylates 14-3-3 proteins (YWHAB, YWHAZ and YWHAH) in a sphingosine-dependent fashion. Phosphorylates ELAVL1 in response to angiotensin-2 treatment. Phosphorylates mitochondrial phospholipid scramblase 3 (PLSCR3), resulting in increased cardiolipin expression on the mitochondrial outer membrane which facilitates apoptosis. Phosphorylates SMPD1 which induces SMPD1 secretion. In Homo sapiens (Human), this protein is Protein kinase C delta type.